The following is a 356-amino-acid chain: NADH-quinone oxidoreductase subunit H (356 aa).

Helical transmembrane passes span 16 to 36 (IAVL…AFLL), 52 to 72 (PNVV…KFVF), 85 to 105 (LYLL…AVVP), 117 to 137 (VGIL…IIGG), 163 to 183 (IGFI…SEII), 201 to 221 (WPMP…ISAL), 254 to 274 (FMVG…ILFF), 295 to 315 (AWYF…FAMV), and 334 to 354 (IFLP…VYGP).

This sequence belongs to the complex I subunit 1 family. In terms of assembly, NDH-1 is composed of 14 different subunits. Subunits NuoA, H, J, K, L, M, N constitute the membrane sector of the complex.

Its subcellular location is the cell inner membrane. It carries out the reaction a quinone + NADH + 5 H(+)(in) = a quinol + NAD(+) + 4 H(+)(out). In terms of biological role, NDH-1 shuttles electrons from NADH, via FMN and iron-sulfur (Fe-S) centers, to quinones in the respiratory chain. The immediate electron acceptor for the enzyme in this species is believed to be ubiquinone. Couples the redox reaction to proton translocation (for every two electrons transferred, four hydrogen ions are translocated across the cytoplasmic membrane), and thus conserves the redox energy in a proton gradient. This subunit may bind ubiquinone. The chain is NADH-quinone oxidoreductase subunit H from Maricaulis maris (strain MCS10) (Caulobacter maris).